Here is a 902-residue protein sequence, read N- to C-terminus: Ephrin type-B receptor 1-B (902 aa).

The Eph LBD domain occupies 1–119; sequence HRVYVEMRFT…FFKKCPSVVQ (119 aa). The Extracellular portion of the chain corresponds to 1-459; the sequence is HRVYVEMRFT…KSELREQLPL (459 aa). 2 Fibronectin type-III domains span residues 240–350 and 351–448; these read VPSG…TNQA and APSS…TEED. Residues N252, N344, and N398 are each glycosylated (N-linked (GlcNAc...) asparagine). A helical membrane pass occupies residues 460-480; sequence IAGSAAAGVVFIVSLVAISIV. Residues 481-902 are Cytoplasmic-facing; it reads CSRKRTYSKE…QISQSPTSIA (422 aa). In terms of domain architecture, Protein kinase spans 537–800; that stretch reads VKIEEVIGAG…EIVNTLDKMI (264 aa). Residues 543–551 and K569 each bind ATP; that span reads IGAGEFGEV. D662 acts as the Proton acceptor in catalysis. One can recognise an SAM domain in the interval 829–893; the sequence is SAFTSVDDWL…LNSIQSMRVQ (65 aa). The short motif at 900 to 902 is the PDZ-binding element; sequence SIA.

It belongs to the protein kinase superfamily. Tyr protein kinase family. Ephrin receptor subfamily. As to quaternary structure, heterotetramer upon binding of the ligand. The heterotetramer is composed of an ephrin dimer and a receptor dimer. Oligomerization is probably required to induce biological responses. Post-translationally, phosphorylated. Autophosphorylation is stimulated by ligands. Expressed in the embryo in the brain and spinal cord and in the first and fourth visceral arches. Most abundant in adult brain, with lower levels in eye, heart, ovary, oviduct, lung and pharynx.

Its subcellular location is the cell membrane. The protein localises to the early endosome membrane. It localises to the cell projection. The protein resides in the dendrite. The enzyme catalyses L-tyrosyl-[protein] + ATP = O-phospho-L-tyrosyl-[protein] + ADP + H(+). In terms of biological role, receptor tyrosine kinase which binds promiscuously transmembrane ephrin-B family ligands residing on adjacent cells, leading to contact-dependent bidirectional signaling into neighboring cells. The signaling pathway downstream of the receptor is referred to as forward signaling while the signaling pathway downstream of the ephrin ligand is referred to as reverse signaling. May play a role in axon guidance during nervous system development. May also play an important redundant role with other ephrin-B receptors in development and maturation of dendritic spines and synapse formation. More generally, may play a role in targeted cell migration and adhesion. Upon activation by ephrin-B ligands activates the MAPK/ERK and the JNK signaling cascades to regulate cell migration and adhesion respectively. In Xenopus laevis (African clawed frog), this protein is Ephrin type-B receptor 1-B (ephb1-b).